Consider the following 284-residue polypeptide: MYVVSTKQMLNNAQRGGYAVPAFNIHNLETMQVVVETAANLHAPVIIAGTPGTFTHAGTENLLALVSAMAKQYHHPLAIHLDHHTKFDDIAQNLRSGVRSVMIDASHLPFAQNISRVKEVVDFCHRFDVSVEAELGQLGGQEDDVQVNEADAFYTNPAQAREFAEATGIDSLAVAIGTAHGMYASAPVLDFSRLENIRQWVNLPLVLHGASGLSTKDIQQTIKLGICKINVATELKNAFSQALKNYLTAHPEATDPRDYLQSAKSAMRDVVSKVIADCGCEGRA.

The Proton donor role is filled by aspartate 82. Zn(2+)-binding residues include histidine 83 and histidine 180. Glycine 181 is a dihydroxyacetone phosphate binding site. Histidine 208 contributes to the Zn(2+) binding site. Residues 209-211 and 230-233 contribute to the dihydroxyacetone phosphate site; these read GAS and NVAT.

It belongs to the class II fructose-bisphosphate aldolase family. TagBP aldolase GatY subfamily. As to quaternary structure, forms a complex with GatZ. Requires Zn(2+) as cofactor.

It carries out the reaction D-tagatofuranose 1,6-bisphosphate = D-glyceraldehyde 3-phosphate + dihydroxyacetone phosphate. It participates in carbohydrate metabolism; D-tagatose 6-phosphate degradation; D-glyceraldehyde 3-phosphate and glycerone phosphate from D-tagatose 6-phosphate: step 2/2. Functionally, catalytic subunit of the tagatose-1,6-bisphosphate aldolase GatYZ, which catalyzes the reversible aldol condensation of dihydroxyacetone phosphate (DHAP or glycerone-phosphate) with glyceraldehyde 3-phosphate (G3P) to produce tagatose 1,6-bisphosphate (TBP). Requires GatZ subunit for full activity and stability. Is involved in the catabolism of galactitol. This chain is D-tagatose-1,6-bisphosphate aldolase subunit GatY (gatY), found in Escherichia coli.